The chain runs to 300 residues: Putative hydrolase ML2424 (300 aa).

Aspartate 56 serves as the catalytic Nucleophile. Positions 56, 58, and 231 each coordinate Mg(2+). The active-site Proton donor is the aspartate 58.

Belongs to the HAD-like hydrolase superfamily. SerB family. Requires Mg(2+) as cofactor.

The polypeptide is Putative hydrolase ML2424 (Mycobacterium leprae (strain TN)).